The sequence spans 97 residues: Co-chaperonin GroES (97 aa).

The protein belongs to the GroES chaperonin family. Heptamer of 7 subunits arranged in a ring. Interacts with the chaperonin GroEL.

The protein resides in the cytoplasm. In terms of biological role, together with the chaperonin GroEL, plays an essential role in assisting protein folding. The GroEL-GroES system forms a nano-cage that allows encapsulation of the non-native substrate proteins and provides a physical environment optimized to promote and accelerate protein folding. GroES binds to the apical surface of the GroEL ring, thereby capping the opening of the GroEL channel. The polypeptide is Co-chaperonin GroES (Edwardsiella ictaluri (strain 93-146)).